We begin with the raw amino-acid sequence, 859 residues long: Photoactivated adenylate cyclase subunit beta (859 aa).

In terms of domain architecture, BLUF 1 spans L56–K149. In terms of domain architecture, Guanylate cyclase 1 spans V205–A333. The disordered stretch occupies residues R420 to Q443. The region spanning L471–T563 is the BLUF 2 domain. One can recognise a Guanylate cyclase 2 domain in the interval V619–E748. Residues A813–R859 are disordered. Over residues R815 to F831 the composition is skewed to basic and acidic residues. Residues R846–R859 show a composition bias toward polar residues.

Belongs to the adenylyl cyclase class-4/guanylyl cyclase family. Heterotetramer of two alpha and two beta subunits. The cofactor is FAD.

Its subcellular location is the cell projection. It is found in the cilium. The protein localises to the flagellum. It carries out the reaction ATP = 3',5'-cyclic AMP + diphosphate. With respect to regulation, activity increased by up to 80-fold under blue light. Functionally, acts as a blue light photoreceptor for the step-up photophobic response. Mediates photoavoidance. In Euglena gracilis, this protein is Photoactivated adenylate cyclase subunit beta.